The following is a 389-amino-acid chain: Large envelope protein (389 aa).

Met1 carries the N-acetylmethionine modification. Residue Gly2 is the site of N-myristoyl glycine; by host attachment. Residues 2–108 (GTNLSVPNPL…PPLRDSHPQA (107 aa)) form a pre-S1 region. Residues 2 to 163 (GTNLSVPNPL…SARTGDPVTI (162 aa)) are pre-S. At 2-170 (GTNLSVPNPL…VTIMENITSG (169 aa)) the chain is on the virion surface; in external conformation side. Topologically, residues 2-242 (GTNLSVPNPL…PGYRWMCLRR (241 aa)) are intravirion; in internal conformation. Over residues 77-95 (VSTIPPPASTNRQSGRQPT) the composition is skewed to polar residues. Residues 77 to 103 (VSTIPPPASTNRQSGRQPTPISPPLRD) form a disordered region. Residues 109-163 (MQWNSTALHQALQDPRVRGLYLPAGGSSSGTVNPAPNIASHISSISARTGDPVTI) are pre-S2. The helical transmembrane segment at 171-191 (FLGPLLVLQAGFFLLTRILTI) threads the bilayer. The Intravirion; in external conformation portion of the chain corresponds to 192–242 (PQSLDSWWTSLNFLGGSPVCLGQNSQSPTSNHSPTSCPPICPGYRWMCLRR). A helical transmembrane segment spans residues 243–263 (FIIFLFILLLCLIFLLVLLDY). Residues 264-337 (QGMLPVCPLI…WASVRFSWLS (74 aa)) are Virion surface-facing. A glycan (N-linked (GlcNAc...) asparagine; by host) is linked at Asn309. A helical transmembrane segment spans residues 338–358 (LLVPFVQWFVGLSPTVWLSAI). Topologically, residues 359-364 (WMMWYW) are intravirion. Residues 365–387 (GPSLYSIVSPFIPLLPIFFCLWV) form a helical membrane-spanning segment. Over 388–389 (YI) the chain is Virion surface.

This sequence belongs to the orthohepadnavirus major surface antigen family. As to quaternary structure, in its internal form (Li-HBsAg), interacts with the capsid protein and with the isoform S. Interacts with host chaperone CANX. In terms of assembly, associates with host chaperone CANX through its pre-S2 N glycan; this association may be essential for isoform M proper secretion. Interacts with isoform L. Interacts with the antigens of satellite virus HDV (HDVAgs); this interaction is required for encapsidation of HDV genomic RNA. Isoform M is N-terminally acetylated by host at a ratio of 90%, and N-glycosylated by host at the pre-S2 region. Post-translationally, myristoylated.

The protein localises to the virion membrane. Functionally, the large envelope protein exists in two topological conformations, one which is termed 'external' or Le-HBsAg and the other 'internal' or Li-HBsAg. In its external conformation the protein attaches the virus to cell receptors and thereby initiating infection. This interaction determines the species specificity and liver tropism. This attachment induces virion internalization predominantly through caveolin-mediated endocytosis. The large envelope protein also assures fusion between virion membrane and endosomal membrane. In its internal conformation the protein plays a role in virion morphogenesis and mediates the contact with the nucleocapsid like a matrix protein. Its function is as follows. The middle envelope protein plays an important role in the budding of the virion. It is involved in the induction of budding in a nucleocapsid independent way. In this process the majority of envelope proteins bud to form subviral lipoprotein particles of 22 nm of diameter that do not contain a nucleocapsid. The polypeptide is Large envelope protein (Hepatitis B virus genotype A2 subtype adw (isolate Japan/Nishioka/1983) (HBV-A)).